Here is a 60-residue protein sequence, read N- to C-terminus: Large ribosomal subunit protein bL32 (60 aa).

Belongs to the bacterial ribosomal protein bL32 family.

This is Large ribosomal subunit protein bL32 from Clostridium acetobutylicum (strain ATCC 824 / DSM 792 / JCM 1419 / IAM 19013 / LMG 5710 / NBRC 13948 / NRRL B-527 / VKM B-1787 / 2291 / W).